Here is a 133-residue protein sequence, read N- to C-terminus: uncharacterized protein (133 aa).

This is an uncharacterized protein from Caenorhabditis elegans.